A 296-amino-acid polypeptide reads, in one-letter code: Protoheme IX farnesyltransferase (296 aa).

A run of 9 helical transmembrane segments spans residues 9–29, 36–56, 84–104, 108–128, 133–153, 163–183, 209–229, 234–254, and 265–285; these read VTKP…FLLA, YPLF…GCVF, AVSL…LWFG, LACW…SLYM, VYGT…GYCA, LILL…IAIF, ITLY…GGYA, LVVA…GYKV, and FGFS…DFMV.

It belongs to the UbiA prenyltransferase family. Protoheme IX farnesyltransferase subfamily.

The protein localises to the cell inner membrane. The catalysed reaction is heme b + (2E,6E)-farnesyl diphosphate + H2O = Fe(II)-heme o + diphosphate. The protein operates within porphyrin-containing compound metabolism; heme O biosynthesis; heme O from protoheme: step 1/1. In terms of biological role, converts heme B (protoheme IX) to heme O by substitution of the vinyl group on carbon 2 of heme B porphyrin ring with a hydroxyethyl farnesyl side group. The sequence is that of Protoheme IX farnesyltransferase from Citrobacter koseri (strain ATCC BAA-895 / CDC 4225-83 / SGSC4696).